The following is a 176-amino-acid chain: Nucleoside triphosphate/diphosphate phosphatase (176 aa).

The active-site Proton donor is the Arg-23. Mg(2+)-binding residues include Asn-87, Asp-103, Asp-105, Asp-107, Asp-120, and Glu-123.

The protein belongs to the Ntdp family. Mg(2+) is required as a cofactor.

The enzyme catalyses a ribonucleoside 5'-triphosphate + H2O = a ribonucleoside 5'-diphosphate + phosphate + H(+). It catalyses the reaction a ribonucleoside 5'-diphosphate + H2O = a ribonucleoside 5'-phosphate + phosphate + H(+). Has nucleoside phosphatase activity towards nucleoside triphosphates and nucleoside diphosphates. The protein is Nucleoside triphosphate/diphosphate phosphatase of Bacillus cereus (strain AH820).